The following is a 275-amino-acid chain: Seminase (275 aa).

An N-terminal signal peptide occupies residues 1 to 19 (MKRLLFLFLLAGILINNHA). An N-linked (GlcNAc...) asparagine glycan is attached at N23. The Peptidase S1 domain maps to 44-268 (VIGGRVTTNA…VKPFIVKGIK (225 aa)). A disulfide bridge links C70 with C86. Catalysis depends on charge relay system residues H85 and D131. Intrachain disulfides connect C194–C210 and C220–C244. S224 functions as the Charge relay system in the catalytic mechanism.

The protein belongs to the peptidase S1 family. In terms of processing, undergoes cleavage in the male during mating with a cleaved product detected in the ejaculatory duct and/or bulb of males by 8-10 minutes after the start of mating. Further cleavage occurs in the mated female. In terms of tissue distribution, produced in the male accessory glands and secreted into seminal fluid.

The protein resides in the secreted. In terms of biological role, seminal fluid protease which is required for cleavage and probably also activation of the metalloprotease Semp1. Also required for a number of female post-mating responses independent of Semp1 including egg laying and sperm usage. The sequence is that of Seminase from Drosophila melanogaster (Fruit fly).